Here is a 963-residue protein sequence, read N- to C-terminus: MERREEQPGAAGAGAAPALDFTVENVEKALHQLYYDPNIENKNLAQKWLMQAQASPQAWHFSWQLLQPDKVPEIQYFGASALHIKISRYWSDIPTDQYESLKAQLFTQITRFASGSKIVLTRLCVALASLALSMMPDAWPCAVADMVRLFQAEDSPVDSQGRCLALLELLTVLPEEFQTSRLPQYRKSLVRTSLAVECGAVFPLLEQLLQQPSSPSCVRQKVLKCFSSWVQLEVPLQDCEALIQAAFAALQDSELFDSSVEAIVNAISQPDAQRYVNTLLKLIPLVLGLQDQLRQAVQNGDMETSHGICRIAVALGENHSRALLDQVEHWQSFLALVNMIMFCTGIPGHFPVNETTSSLTLTFWYTLQDDILSFEAEKQAVYQQVYRPVYFQLVDVLLHKAQFPSDEEYGFWSSDEKEQFRIYRVDISDTLMYVYEMLGAELLSNLYDKLGRLLTSSEEPYSWQHTEALLYGFQSIAETIDVNYSDVVPGLIGLIPRISISNVQLADTVMFTIGALSEWLADHPVMINSVLPLVLHALGNPELSISSVSTLKKICRECKYDLPPYAANIVAVSQDVLMKQIHKTSQCMWLMQALGFLLSALQVEEILKNLHSLISPYIQQLEKLAEEIPNPSNKLAIVHILGLLSNLFTTLDVSHHEDDHEGSELRKLPVPQGPNPVVVVLQQVFQLIQKVLSKWLNDAQVVEAVCAIFEKSVKTLLDDFAPMVPQLCEMLGRMYSTIPQASALDLTRQLVHIFAHEPAHFPPIEALFLLVTSVTLTLFQQGPRDHPDIVDSFMQLLAQALKRKPDLFLCERLDVKAVFQCAVLALKFPEAPTVKASCGFFTELLPRCGEVEPVGKVVQEDGRMLLIAVLEAIGGQASRSLMDCFADILFALNKHCFSLLSVWIKEALQAPGFPSARLSPEQKDTFSQQILRERVNKRRVKEMVKEFTLLCRGLHGTDYTADY.

20 HEAT repeats span residues Glu-24–Ala-54, Pro-56–Arg-88, Thr-95–Met-135, Ala-142–Thr-179, Leu-194–Gln-231, Leu-236–Ser-268, Val-276–Asp-325, Trp-330–Leu-372, Glu-375–Leu-438, Ala-440–Ile-476, Val-487–Asp-522, Pro-524–Cys-558, Leu-562–Ala-600, Val-603–Phe-648, Pro-676–Leu-716, Phe-720–Phe-754, Phe-761–Arg-803, Val-815–Leu-845, Glu-860–Asn-893, and Phe-897–Leu-931. One can recognise an Importin N-terminal domain in the interval Ala-45–Arg-111.

It belongs to the importin beta family. In terms of assembly, interacts with UBC9, RAN, RBM8A, eIF-1A and PAX6.

The protein localises to the cytoplasm. Its subcellular location is the nucleus. Its function is as follows. Functions in nuclear protein import as nuclear transport receptor. Serves as receptor for nuclear localization signals (NLS) in cargo substrates. Is thought to mediate docking of the importin/substrate complex to the nuclear pore complex (NPC) through binding to nucleoporin and the complex is subsequently translocated through the pore by an energy requiring, Ran-dependent mechanism. At the nucleoplasmic side of the NPC, Ran binds to the importin, the importin/substrate complex dissociates and importin is re-exported from the nucleus to the cytoplasm where GTP hydrolysis releases Ran. The directionality of nuclear import is thought to be conferred by an asymmetric distribution of the GTP- and GDP-bound forms of Ran between the cytoplasm and nucleus. Mediates the nuclear import of UBC9, the RBM8A/MAGOH complex, PAX6 and probably other members of the paired homeobox family. Also mediates nuclear export of eIF-1A, and the cytoplasmic release of eIF-1A is triggered by the loading of import substrates onto IPO13. The sequence is that of Importin-13 (IPO13) from Bos taurus (Bovine).